A 348-amino-acid chain; its full sequence is Flavonol synthase/flavanone 3-hydroxylase (348 aa).

The region spanning 209–309 is the Fe2OG dioxygenase domain; it reads EIVYLLKINY…RMSWPVFLEP (101 aa). H234, D236, and H290 together coordinate Fe cation.

The protein belongs to the iron/ascorbate-dependent oxidoreductase family. It depends on L-ascorbate as a cofactor. The cofactor is Fe cation.

Its subcellular location is the cytoplasm. The enzyme catalyses a (2R,3R)-dihydroflavonol + 2-oxoglutarate + O2 = a flavonol + succinate + CO2 + H2O. It catalyses the reaction a (2S)-flavan-4-one + 2-oxoglutarate + O2 = a (2R,3R)-dihydroflavonol + succinate + CO2. It functions in the pathway secondary metabolite biosynthesis; flavonoid biosynthesis. Functionally, catalyzes the formation of flavonols from dihydroflavonols. It can act on dihydrokaempferol to produce kaempferol, on dihydroquercetin to produce quercitin and on dihydromyricetin to produce myricetin. The sequence is that of Flavonol synthase/flavanone 3-hydroxylase (FL) from Petunia hybrida (Petunia).